A 514-amino-acid chain; its full sequence is Sugar transport protein 10 (514 aa).

Over 1-18 (MAGGAFVSEGGGGGRSYE) the chain is Cytoplasmic. 10 consecutive transmembrane segments (helical) span residues 19–39 (GGVT…GLLF), 86–106 (LFTS…SVIT), 113–133 (VSMF…AFAV), 135–155 (VSML…ANQS), 170–190 (GALN…ANLI), 204–224 (VSLG…FILP), 285–305 (LIFC…VIMF), 320–340 (AALM…FVSI), 350–370 (LLFL…GSFI), and 389–409 (WILA…GPLG). A disulfide bridge connects residues C77 and C449. Residue Q177 participates in beta-D-glucose binding. 4 residues coordinate beta-D-glucose: Q295, Q296, N301, and N332. Residue W410 coordinates beta-D-glucose. 2 consecutive transmembrane segments (helical) span residues 428-448 (INVS…LTML) and 453-473 (FGLF…IYFL). Residues 474-514 (LPETKGVPIEEMGRVWKQHWFWKKYIPEDAIIGGHDDNNTN) are Cytoplasmic-facing.

Belongs to the major facilitator superfamily. Sugar transporter (TC 2.A.1.1) family. Expressed in primordia of lateral roots, pollinated stigmata, and pollen tubes.

It localises to the membrane. The enzyme catalyses D-glucose(out) + H(+)(out) = D-glucose(in) + H(+)(in). It catalyses the reaction D-mannose(out) + H(+)(out) = D-mannose(in) + H(+)(in). It carries out the reaction D-galactose(in) + H(+)(in) = D-galactose(out) + H(+)(out). Hexose-H(+) symporter that catalyzes the high-affinity uptake of glucose, galactose and mannose. Proton-coupled symporter responsible for the uptake of glucose from the apoplast into the cells. In Arabidopsis thaliana (Mouse-ear cress), this protein is Sugar transport protein 10.